Consider the following 158-residue polypeptide: Inorganic pyrophosphatase (158 aa).

Residue glutamate 8 coordinates Mg(2+). Residues lysine 16, arginine 30, and tyrosine 42 each coordinate substrate. Mg(2+) is bound by residues aspartate 52, aspartate 57, aspartate 84, and aspartate 89. Catalysis depends on aspartate 89, which acts as the Proton acceptor. Tyrosine 125 is a substrate binding site.

Belongs to the PPase family. In terms of assembly, homohexamer. Requires Mg(2+) as cofactor.

It localises to the cytoplasm. The catalysed reaction is diphosphate + H2O = 2 phosphate + H(+). Catalyzes the hydrolysis of inorganic pyrophosphate (PPi) forming two phosphate ions. The polypeptide is Inorganic pyrophosphatase (Corynebacterium efficiens (strain DSM 44549 / YS-314 / AJ 12310 / JCM 11189 / NBRC 100395)).